A 543-amino-acid polypeptide reads, in one-letter code: CTP synthase (543 aa).

The interval 1-267 (MKQTKYIFVT…LSPIAEILDL (267 aa)) is amidoligase domain. CTP is bound at residue serine 15. Serine 15 is a binding site for UTP. ATP-binding positions include 16-21 (SLGKGI) and aspartate 73. Mg(2+)-binding residues include aspartate 73 and glutamate 141. CTP-binding positions include 148–150 (DIE), 188–193 (KTKPTQ), and lysine 224. Residues 188 to 193 (KTKPTQ) and lysine 224 each bind UTP. Residues 292–543 (KIAFVGKYVD…IKAAINYEDN (252 aa)) form the Glutamine amidotransferase type-1 domain. Position 354 (glycine 354) interacts with L-glutamine. Residue cysteine 381 is the Nucleophile; for glutamine hydrolysis of the active site. L-glutamine is bound by residues 382-385 (LGMQ), glutamate 405, and arginine 473. Catalysis depends on residues histidine 516 and glutamate 518.

This sequence belongs to the CTP synthase family. As to quaternary structure, homotetramer.

The catalysed reaction is UTP + L-glutamine + ATP + H2O = CTP + L-glutamate + ADP + phosphate + 2 H(+). It catalyses the reaction L-glutamine + H2O = L-glutamate + NH4(+). It carries out the reaction UTP + NH4(+) + ATP = CTP + ADP + phosphate + 2 H(+). The protein operates within pyrimidine metabolism; CTP biosynthesis via de novo pathway; CTP from UDP: step 2/2. Its activity is regulated as follows. Allosterically activated by GTP, when glutamine is the substrate; GTP has no effect on the reaction when ammonia is the substrate. The allosteric effector GTP functions by stabilizing the protein conformation that binds the tetrahedral intermediate(s) formed during glutamine hydrolysis. Inhibited by the product CTP, via allosteric rather than competitive inhibition. Functionally, catalyzes the ATP-dependent amination of UTP to CTP with either L-glutamine or ammonia as the source of nitrogen. Regulates intracellular CTP levels through interactions with the four ribonucleotide triphosphates. The sequence is that of CTP synthase from Campylobacter jejuni subsp. jejuni serotype O:2 (strain ATCC 700819 / NCTC 11168).